A 338-amino-acid polypeptide reads, in one-letter code: Glycerol-3-phosphate dehydrogenase [NAD(P)+] (338 aa).

NADPH-binding residues include S14, Y15, H35, and K109. The sn-glycerol 3-phosphate site is built by K109, G138, and T140. A142 serves as a coordination point for NADPH. Positions 194, 247, 257, 258, and 259 each coordinate sn-glycerol 3-phosphate. K194 (proton acceptor) is an active-site residue. Residue R258 participates in NADPH binding. NADPH is bound by residues V282 and E284.

The protein belongs to the NAD-dependent glycerol-3-phosphate dehydrogenase family.

It is found in the cytoplasm. The catalysed reaction is sn-glycerol 3-phosphate + NAD(+) = dihydroxyacetone phosphate + NADH + H(+). It carries out the reaction sn-glycerol 3-phosphate + NADP(+) = dihydroxyacetone phosphate + NADPH + H(+). It functions in the pathway membrane lipid metabolism; glycerophospholipid metabolism. Its function is as follows. Catalyzes the reduction of the glycolytic intermediate dihydroxyacetone phosphate (DHAP) to sn-glycerol 3-phosphate (G3P), the key precursor for phospholipid synthesis. This is Glycerol-3-phosphate dehydrogenase [NAD(P)+] from Shewanella baltica (strain OS185).